Consider the following 389-residue polypeptide: S-adenosylmethionine synthase (389 aa).

Histidine 17 lines the ATP pocket. Position 19 (aspartate 19) interacts with Mg(2+). Residue glutamate 45 participates in K(+) binding. L-methionine-binding residues include glutamate 58 and glutamine 101. A flexible loop region spans residues glutamine 101–proline 111. Residues aspartate 168–lysine 170, arginine 234–phenylalanine 235, aspartate 243, arginine 249–lysine 250, and lysine 270 each bind ATP. Aspartate 243 contacts L-methionine. Lysine 274 provides a ligand contact to L-methionine.

This sequence belongs to the AdoMet synthase family. In terms of assembly, homotetramer; dimer of dimers. Requires Mg(2+) as cofactor. K(+) is required as a cofactor.

It is found in the cytoplasm. The catalysed reaction is L-methionine + ATP + H2O = S-adenosyl-L-methionine + phosphate + diphosphate. Its pathway is amino-acid biosynthesis; S-adenosyl-L-methionine biosynthesis; S-adenosyl-L-methionine from L-methionine: step 1/1. In terms of biological role, catalyzes the formation of S-adenosylmethionine (AdoMet) from methionine and ATP. The overall synthetic reaction is composed of two sequential steps, AdoMet formation and the subsequent tripolyphosphate hydrolysis which occurs prior to release of AdoMet from the enzyme. This Syntrophobacter fumaroxidans (strain DSM 10017 / MPOB) protein is S-adenosylmethionine synthase.